Here is a 389-residue protein sequence, read N- to C-terminus: S-adenosylmethionine synthase (389 aa).

An ATP-binding site is contributed by His15. Residue Asp17 participates in Mg(2+) binding. Position 43 (Glu43) interacts with K(+). Residues Glu56 and Gln99 each coordinate L-methionine. Residues 99–109 (QSPDIAQGVNE) form a flexible loop region. Residues 166–168 (DAK), 234–235 (RF), Asp243, 249–250 (RK), Ala266, and Lys270 contribute to the ATP site. An L-methionine-binding site is contributed by Asp243. Lys274 is an L-methionine binding site.

Belongs to the AdoMet synthase family. Homotetramer; dimer of dimers. Mg(2+) is required as a cofactor. The cofactor is K(+).

Its subcellular location is the cytoplasm. The enzyme catalyses L-methionine + ATP + H2O = S-adenosyl-L-methionine + phosphate + diphosphate. It participates in amino-acid biosynthesis; S-adenosyl-L-methionine biosynthesis; S-adenosyl-L-methionine from L-methionine: step 1/1. Its function is as follows. Catalyzes the formation of S-adenosylmethionine (AdoMet) from methionine and ATP. The overall synthetic reaction is composed of two sequential steps, AdoMet formation and the subsequent tripolyphosphate hydrolysis which occurs prior to release of AdoMet from the enzyme. This is S-adenosylmethionine synthase from Neisseria meningitidis serogroup B (strain ATCC BAA-335 / MC58).